The sequence spans 91 residues: Small ribosomal subunit protein bS20 (91 aa).

Residues 1–21 are compositionally biased toward basic and acidic residues; that stretch reads MPLHKSAEKRLRQAARRNERN. Residues 1–24 are disordered; sequence MPLHKSAEKRLRQAARRNERNRAR.

Belongs to the bacterial ribosomal protein bS20 family.

In terms of biological role, binds directly to 16S ribosomal RNA. This is Small ribosomal subunit protein bS20 from Chlorobaculum parvum (strain DSM 263 / NCIMB 8327) (Chlorobium vibrioforme subsp. thiosulfatophilum).